A 75-amino-acid chain; its full sequence is MTVKRTTIELDEDLVRAAQAVTGETLRATVERALQQLVAAAAEQAAARRRRIVDHLAHAGTHVDADVLLSEQAWR.

Functionally, putative antitoxin component of a possible type II toxin-antitoxin (TA) system. The cognate toxin is VapC17. This is Putative antitoxin VapB17 (vapB17) from Mycobacterium tuberculosis (strain CDC 1551 / Oshkosh).